The chain runs to 494 residues: Inosine-5'-monophosphate dehydrogenase (494 aa).

CBS domains follow at residues 93-154 and 158-217; these read IIRN…DEKI and MTTN…CKDS. Residues D251 and 301–303 contribute to the NAD(+) site; that span reads GIG. 2 residues coordinate K(+): G303 and G305. S306 provides a ligand contact to IMP. Position 308 (C308) interacts with K(+). The active-site Thioimidate intermediate is C308. IMP-binding positions include 341–343, 364–365, and 388–392; these read DGG, GS, and YRGMG. The Proton acceptor role is filled by R406. Residue E421 participates in IMP binding. 3 residues coordinate K(+): E475, S476, and H477.

This sequence belongs to the IMPDH/GMPR family. Homotetramer. K(+) serves as cofactor.

It catalyses the reaction IMP + NAD(+) + H2O = XMP + NADH + H(+). It participates in purine metabolism; XMP biosynthesis via de novo pathway; XMP from IMP: step 1/1. Mycophenolic acid (MPA) is a non-competitive inhibitor that prevents formation of the closed enzyme conformation by binding to the same site as the amobile flap. In contrast, mizoribine monophosphate (MZP) is a competitive inhibitor that induces the closed conformation. MPA is a potent inhibitor of mammalian IMPDHs but a poor inhibitor of the bacterial enzymes. MZP is a more potent inhibitor of bacterial IMPDH. Catalyzes the conversion of inosine 5'-phosphate (IMP) to xanthosine 5'-phosphate (XMP), the first committed and rate-limiting step in the de novo synthesis of guanine nucleotides, and therefore plays an important role in the regulation of cell growth. In Chlorobaculum tepidum (strain ATCC 49652 / DSM 12025 / NBRC 103806 / TLS) (Chlorobium tepidum), this protein is Inosine-5'-monophosphate dehydrogenase.